The following is a 201-amino-acid chain: Alpha-1-acid glycoprotein 2 (201 aa).

Residues 1 to 18 (MALSWVLTVLSLLPLLEA) form the signal peptide. Q19 is subject to Pyrrolidone carboxylic acid. Intrachain disulfides connect C23-C165 and C90-C183. N33 carries N-linked (GlcNAc...) (complex) asparagine glycosylation. N-linked (GlcNAc...) asparagine glycans are attached at residues N56, N72, N93, and N103.

The protein belongs to the calycin superfamily. Lipocalin family. In terms of processing, N-glycosylated. N-glycan heterogeneity at Asn-33: Hex5HexNAc4 (minor), Hex6HexNAc5 (major) and dHex1Hex6HexNAc5 (minor). In terms of tissue distribution, expressed by the liver and secreted in plasma.

The protein localises to the secreted. Functions as a transport protein in the blood stream. Binds various hydrophobic ligands in the interior of its beta-barrel domain. Also binds synthetic drugs and influences their distribution and availability. Appears to function in modulating the activity of the immune system during the acute-phase reaction. In Homo sapiens (Human), this protein is Alpha-1-acid glycoprotein 2 (ORM2).